Reading from the N-terminus, the 377-residue chain is Subtilisin-like protease CPC735_012930 (377 aa).

The N-terminal stretch at 1–20 (MSILFKIFASTLAVVSVVNA) is a signal peptide. A propeptide spanning residues 21 to 118 (GELLNFENER…VEPDRMASAT (98 aa)) is cleaved from the precursor. An Inhibitor I9 domain is found at 36-114 (SYIVVMKDGT…HVKYVEPDRM (79 aa)). In terms of domain architecture, Peptidase S8 spans 128–377 (SWGLGRISHT…NKLLYNKSGF (250 aa)). Active-site charge relay system residues include aspartate 160 and histidine 191. The N-linked (GlcNAc...) asparagine glycan is linked to asparagine 252. The active-site Charge relay system is serine 323. N-linked (GlcNAc...) asparagine glycosylation is found at asparagine 364 and asparagine 373.

Belongs to the peptidase S8 family.

Its subcellular location is the secreted. Its function is as follows. Secreted subtilisin-like serine protease with keratinolytic activity that contributes to pathogenicity. This chain is Subtilisin-like protease CPC735_012930, found in Coccidioides posadasii (strain C735) (Valley fever fungus).